The primary structure comprises 371 residues: Phospholipid-transporting ATPase accessory subunit ivn1 (371 aa).

Over 1 to 39 (MSQTEIVKKPKHKRFKRPDKSRFVQQTLPAWQFIFTPWT) the chain is Cytoplasmic. Residues 40–60 (VLPLLFLLGIVFAPLGAGMFV) traverse the membrane as a helical segment. The Extracellular portion of the chain corresponds to 61–325 (ASRRVKELRI…STTSVIGGKN (265 aa)). 2 cysteine pairs are disulfide-bonded: Cys75–Cys111 and Cys166–Cys181. An N-linked (GlcNAc...) asparagine glycan is attached at Asn99. Asn190, Asn212, Asn216, Asn233, Asn284, and Asn297 each carry an N-linked (GlcNAc...) asparagine glycan. A helical membrane pass occupies residues 326–346 (YFLGILYFVIGGLCAASGVIL). Residues 347–371 (SIACLIKPRRVGDPRYLSWNRGKSS) lie on the Cytoplasmic side of the membrane.

This sequence belongs to the CDC50/LEM3 family.

It is found in the endoplasmic reticulum membrane. Accessory component of a P4-ATPase flippase complex which catalyzes the hydrolysis of ATP coupled to the transport of aminophospholipids from the lumenal to the cytosolic leaflet of membranes and ensures the maintenance of asymmetric distribution of phospholipids. The protein is Phospholipid-transporting ATPase accessory subunit ivn1 (ivn1) of Schizosaccharomyces pombe (strain 972 / ATCC 24843) (Fission yeast).